We begin with the raw amino-acid sequence, 291 residues long: Glycine--tRNA ligase alpha subunit (291 aa).

Belongs to the class-II aminoacyl-tRNA synthetase family. In terms of assembly, tetramer of two alpha and two beta subunits.

It is found in the cytoplasm. It catalyses the reaction tRNA(Gly) + glycine + ATP = glycyl-tRNA(Gly) + AMP + diphosphate. This chain is Glycine--tRNA ligase alpha subunit, found in Nitratidesulfovibrio vulgaris (strain DSM 19637 / Miyazaki F) (Desulfovibrio vulgaris).